A 351-amino-acid polypeptide reads, in one-letter code: Rhodopsin (351 aa).

At 1 to 36 (MNGTEGPFFYIPMSNATGLVRSPYDYPQYYLVPPWG) the chain is on the extracellular side. 2 N-linked (GlcNAc...) asparagine glycosylation sites follow: N2 and N15. The chain crosses the membrane as a helical span at residues 37–61 (YACLAAYMFLLILTGFPVNFLTLYV). At 62-73 (TIEHKKLRSPLN) the chain is on the cytoplasmic side. A helical transmembrane segment spans residues 74-96 (YILLNLAVADLFMVIGGFTTTMW). The Extracellular portion of the chain corresponds to 97–110 (TSLNGYFVFGRMGC). A disulfide bond links C110 and C187. A helical membrane pass occupies residues 111 to 133 (NIEGFFATLGGEIALWSLVVLSM). The 'Ionic lock' involved in activated form stabilization motif lies at 134-136 (ERW). Over 134-152 (ERWIVVCKPISNFRFGENH) the chain is Cytoplasmic. Residues 153–173 (AVMGVAFSWFMAAACAVPPLV) traverse the membrane as a helical segment. The Extracellular portion of the chain corresponds to 174-202 (GWSRYIPEGMQCSCGIDYYTRAEGFNNES). N-linked (GlcNAc...) asparagine glycosylation is present at N200. A helical transmembrane segment spans residues 203 to 224 (FVIYMFVVHFTCPLTIITFCYG). Residues 225–252 (RLVCTVKEAAAQQQESETTQRAEREVTR) are Cytoplasmic-facing. The chain crosses the membrane as a helical span at residues 253–274 (MVIIMFVAFLACWVPYASVAWY). The Extracellular portion of the chain corresponds to 275–286 (IFTHQGSEFGPV). Residues 287–308 (FMTIPAFFAKSSAVYNPVIYIC) form a helical membrane-spanning segment. K296 is subject to N6-(retinylidene)lysine. The Cytoplasmic segment spans residues 309 to 351 (LNKQFRHCMITTLCCGKNPFEEEEGSTTASKTEASSVCSVSPA). S-palmitoyl cysteine attachment occurs at residues C322 and C323. Residues 330-351 (EEEGSTTASKTEASSVCSVSPA) form a disordered region. Residues 334-351 (STTASKTEASSVCSVSPA) are compositionally biased toward polar residues.

This sequence belongs to the G-protein coupled receptor 1 family. Opsin subfamily. Phosphorylated on some or all of the serine and threonine residues present in the C-terminal region. Post-translationally, contains one covalently linked retinal chromophore.

Its subcellular location is the membrane. The protein localises to the cell projection. It is found in the cilium. It localises to the photoreceptor outer segment. Photoreceptor required for image-forming vision at low light intensity. While most salt water fish species use retinal as chromophore, most freshwater fish use 3-dehydroretinal, or a mixture of retinal and 3-dehydroretinal. Light-induced isomerization of 11-cis to all-trans retinal triggers a conformational change that activates signaling via G-proteins. Subsequent receptor phosphorylation mediates displacement of the bound G-protein alpha subunit by arrestin and terminates signaling. This Sardina pilchardus (European pilchard) protein is Rhodopsin (rho).